The following is a 690-amino-acid chain: Rho guanine nucleotide exchange factor 4 (690 aa).

Residues 73-126 (KTQRKKLQKQAHVERRLHIGAVHKDGVKCWRKTIITSPESLNLPRRSHPLSQSA) are ABR (APC-binding region) domain. The interval 113–145 (LNLPRRSHPLSQSAPTGLNHMGWPEHTPGTAMP) is disordered. An SH3 domain is found at 194 to 253 (GSVVCAEALWDHVTMDDQELGFKAGDVIEVMDATNREWWWGRVADGEGWFPASFVRLRVN). Residues 257–282 (PADDDAPLAGNSGAEDGGAEAQSSKD) form a disordered region. Positions 284–468 (MRTNVINEIL…KNVAQLINER (185 aa)) constitute a DH domain. The PH domain occupies 499 to 606 (ELIYSGELTR…WLKAFARERE (108 aa)).

Isoform 3 interacts with RHOA and RAC1, and (via ABR domain) with APC. Found in a complex consisting of ARHGEF4, APC and CTNNB1. Expressed at high levels in the brain, skeletal muscle and testis and at low levels in the kidney, lung, small intestine, ovary and prostate. Expression is aberrantly enhanced in most colorectal tumors.

The protein resides in the cytoplasm. It localises to the cell projection. Its subcellular location is the ruffle membrane. Functionally, acts as a guanine nucleotide exchange factor (GEF) for RHOA, RAC1 and CDC42 GTPases. Binding of APC may activate RAC1 GEF activity. The APC-ARHGEF4 complex seems to be involved in cell migration as well as in E-cadherin-mediated cell-cell adhesion. Required for MMP9 up-regulation via the JNK signaling pathway in colorectal tumor cells. Involved in tumor angiogenesis and may play a role in intestinal adenoma formation and tumor progression. In Homo sapiens (Human), this protein is Rho guanine nucleotide exchange factor 4 (ARHGEF4).